Reading from the N-terminus, the 178-residue chain is Bifunctional protein PyrR (178 aa).

Positions 99 to 111 (VVLVDDVIFKGRT) match the PRPP-binding motif.

It belongs to the purine/pyrimidine phosphoribosyltransferase family. PyrR subfamily.

The enzyme catalyses UMP + diphosphate = 5-phospho-alpha-D-ribose 1-diphosphate + uracil. In terms of biological role, regulates the transcription of the pyrimidine nucleotide (pyr) operon in response to exogenous pyrimidines. Its function is as follows. Also displays a weak uracil phosphoribosyltransferase activity which is not physiologically significant. This is Bifunctional protein PyrR from Nostoc punctiforme (strain ATCC 29133 / PCC 73102).